Reading from the N-terminus, the 414-residue chain is ORC1-type DNA replication protein 11 (414 aa).

Residues valine 60–alanine 64, tyrosine 207, and arginine 219 each bind ATP.

The protein belongs to the CDC6/cdc18 family.

Involved in regulation of DNA replication. In Haloarcula marismortui (strain ATCC 43049 / DSM 3752 / JCM 8966 / VKM B-1809) (Halobacterium marismortui), this protein is ORC1-type DNA replication protein 11 (cdc6k).